The chain runs to 604 residues: BTB/POZ domain-containing protein SR1IP1 (604 aa).

In terms of domain architecture, BTB spans 27–96 (SDVTVHVGEA…CYGINFDMST (70 aa)). Residues 201-474 (DWWAEDLTVL…VQVLYYEQQR (274 aa)) form the NPH3 domain. Position 415 is a phosphotyrosine (Y415). Disordered stretches follow at residues 478–499 (EVTN…VLPP) and 532–604 (FEKE…HSIS). Residues 500–541 (KLSSYTDELSKLKRENQDLKLELLKMKMKLKEFEKESEKKTS) adopt a coiled-coil conformation. Low complexity predominate over residues 541–558 (SSSTISTNPSSPISTAST). Residues 591–604 (GRTKPPKDRRHSIS) show a composition bias toward basic residues.

The protein belongs to the NPH3 family. As to quaternary structure, interacts with CAMTA3 and CUL3A.

It functions in the pathway protein modification; protein ubiquitination. Functionally, acts as a substrate-specific adapter of an E3 ubiquitin-protein ligase complex (CUL3-RBX1-BTB) which mediates the ubiquitination and subsequent proteasomal degradation of target proteins. Involved in disease resistance. Acts as a substrate adapter that recruits CAMTA3/SR1 for ubiquitination and degradation during pathogen infection. Acts as a positive regulator of plant defense by removing the defense suppressor CAMTA3/SR1. The sequence is that of BTB/POZ domain-containing protein SR1IP1 from Arabidopsis thaliana (Mouse-ear cress).